The chain runs to 130 residues: uncharacterized protein (130 aa).

The protein belongs to the thioester dehydratase family. FabZ subfamily.

This is an uncharacterized protein from Bacillus subtilis (strain 168).